The sequence spans 174 residues: NADH-ubiquinone oxidoreductase chain 6 (174 aa).

The next 5 helical transmembrane spans lie at 1 to 21, 24 to 44, 46 to 66, 86 to 106, and 151 to 171; these read MTYV…GFSS, SPIY…GIVL, FGGS…MLVV, VMIL…VVYM, and WLMV…IEIT.

It belongs to the complex I subunit 6 family. As to quaternary structure, core subunit of respiratory chain NADH dehydrogenase (Complex I) which is composed of 45 different subunits.

The protein localises to the mitochondrion inner membrane. The enzyme catalyses a ubiquinone + NADH + 5 H(+)(in) = a ubiquinol + NAD(+) + 4 H(+)(out). In terms of biological role, core subunit of the mitochondrial membrane respiratory chain NADH dehydrogenase (Complex I) which catalyzes electron transfer from NADH through the respiratory chain, using ubiquinone as an electron acceptor. Essential for the catalytic activity and assembly of complex I. This Oryctolagus cuniculus (Rabbit) protein is NADH-ubiquinone oxidoreductase chain 6 (MT-ND6).